Consider the following 259-residue polypeptide: BTB/POZ domain-containing protein KCTD4 (259 aa).

The 102-residue stretch at 33 to 134 folds into the BTB domain; sequence TLMTLNVGGY…EVKSRWEKEQ (102 aa).

This is BTB/POZ domain-containing protein KCTD4 (Kctd4) from Mus musculus (Mouse).